A 100-amino-acid polypeptide reads, in one-letter code: Urease subunit gamma (100 aa).

Belongs to the urease gamma subunit family. Heterotrimer of UreA (gamma), UreB (beta) and UreC (alpha) subunits. Three heterotrimers associate to form the active enzyme.

The protein localises to the cytoplasm. It carries out the reaction urea + 2 H2O + H(+) = hydrogencarbonate + 2 NH4(+). Its pathway is nitrogen metabolism; urea degradation; CO(2) and NH(3) from urea (urease route): step 1/1. The chain is Urease subunit gamma from Nostoc punctiforme (strain ATCC 29133 / PCC 73102).